The chain runs to 308 residues: Acetylglutamate kinase (308 aa).

Substrate-binding positions include 67–68 (GG), R89, and N193.

Belongs to the acetylglutamate kinase family. ArgB subfamily.

The protein localises to the cytoplasm. It catalyses the reaction N-acetyl-L-glutamate + ATP = N-acetyl-L-glutamyl 5-phosphate + ADP. It participates in amino-acid biosynthesis; L-arginine biosynthesis; N(2)-acetyl-L-ornithine from L-glutamate: step 2/4. Its function is as follows. Catalyzes the ATP-dependent phosphorylation of N-acetyl-L-glutamate. The sequence is that of Acetylglutamate kinase from Nitratidesulfovibrio vulgaris (strain DP4) (Desulfovibrio vulgaris).